Reading from the N-terminus, the 130-residue chain is Small ribosomal subunit protein uS8 (130 aa).

The protein belongs to the universal ribosomal protein uS8 family. As to quaternary structure, part of the 30S ribosomal subunit. Contacts proteins S5 and S12.

In terms of biological role, one of the primary rRNA binding proteins, it binds directly to 16S rRNA central domain where it helps coordinate assembly of the platform of the 30S subunit. The chain is Small ribosomal subunit protein uS8 from Shewanella pealeana (strain ATCC 700345 / ANG-SQ1).